The following is a 161-amino-acid chain: Nucleotide-binding protein LHK_01423 (161 aa).

The protein belongs to the YajQ family.

In terms of biological role, nucleotide-binding protein. This chain is Nucleotide-binding protein LHK_01423, found in Laribacter hongkongensis (strain HLHK9).